Here is a 300-residue protein sequence, read N- to C-terminus: Ribokinase (300 aa).

Substrate contacts are provided by residues 11–13 (SMD), 39–43 (GKGAN), and Glu139. Residues Asn183 and 210 to 215 (TLGSEG) contribute to the ATP site. K(+)-binding residues include Asp236 and Thr238. Position 241–242 (241–242 (GD)) interacts with ATP. Asp242 lines the substrate pocket. Asp242 acts as the Proton acceptor in catalysis. Positions 272, 275, and 277 each coordinate K(+).

Belongs to the carbohydrate kinase PfkB family. Ribokinase subfamily. As to quaternary structure, homodimer. It depends on Mg(2+) as a cofactor.

It localises to the cytoplasm. It carries out the reaction D-ribose + ATP = D-ribose 5-phosphate + ADP + H(+). The protein operates within carbohydrate metabolism; D-ribose degradation; D-ribose 5-phosphate from beta-D-ribopyranose: step 2/2. With respect to regulation, activated by a monovalent cation that binds near, but not in, the active site. The most likely occupant of the site in vivo is potassium. Ion binding induces a conformational change that may alter substrate affinity. Its function is as follows. Catalyzes the phosphorylation of ribose at O-5 in a reaction requiring ATP and magnesium. The resulting D-ribose-5-phosphate can then be used either for sythesis of nucleotides, histidine, and tryptophan, or as a component of the pentose phosphate pathway. The protein is Ribokinase of Lactococcus lactis subsp. lactis (strain IL1403) (Streptococcus lactis).